The primary structure comprises 413 residues: Putative F-box protein At3g58820 (413 aa).

An F-box domain is found at 1-48 (MDGVSSLPNELLCHILSFLTTKEAALTSILSKRWRNLIAFVPNLYIDD).

The chain is Putative F-box protein At3g58820 from Arabidopsis thaliana (Mouse-ear cress).